Here is a 145-residue protein sequence, read N- to C-terminus: MAFVRSRANASSGIGVAAECKQTFLELQRKKSHRYVIFKIDDKCKEVVVEKTGSSTESFDDFMDSLPESDCRYAIYDFDFVTEENCQKSKIFFVAWSPSVSRIRAKMLYATSKERFRRELDGVHYEIQATDPSELDIELLRERAH.

One can recognise an ADF-H domain in the interval 11–145 (SSGIGVAAEC…DIELLRERAH (135 aa)).

Belongs to the actin-binding proteins ADF family.

Actin-depolymerizing protein. Severs actin filaments (F-actin) and binds to actin monomers. The protein is Actin-depolymerizing factor 11 (ADF11) of Oryza sativa subsp. japonica (Rice).